A 215-amino-acid chain; its full sequence is Pyrophosphatase PpaX (215 aa).

The active-site Nucleophile is the Asp-9.

This sequence belongs to the HAD-like hydrolase superfamily. PpaX family. The cofactor is Mg(2+).

It catalyses the reaction diphosphate + H2O = 2 phosphate + H(+). Hydrolyzes pyrophosphate formed during P-Ser-HPr dephosphorylation by HPrK/P. Might play a role in controlling the intracellular pyrophosphate pool. The sequence is that of Pyrophosphatase PpaX from Halalkalibacterium halodurans (strain ATCC BAA-125 / DSM 18197 / FERM 7344 / JCM 9153 / C-125) (Bacillus halodurans).